The following is a 159-amino-acid chain: Ribosomal RNA large subunit methyltransferase H (159 aa).

S-adenosyl-L-methionine contacts are provided by residues leucine 76, glycine 108, and 127-132; that span reads LSDMTF.

This sequence belongs to the RNA methyltransferase RlmH family. As to quaternary structure, homodimer.

Its subcellular location is the cytoplasm. It carries out the reaction pseudouridine(1915) in 23S rRNA + S-adenosyl-L-methionine = N(3)-methylpseudouridine(1915) in 23S rRNA + S-adenosyl-L-homocysteine + H(+). Specifically methylates the pseudouridine at position 1915 (m3Psi1915) in 23S rRNA. The chain is Ribosomal RNA large subunit methyltransferase H from Acetivibrio thermocellus (strain ATCC 27405 / DSM 1237 / JCM 9322 / NBRC 103400 / NCIMB 10682 / NRRL B-4536 / VPI 7372) (Clostridium thermocellum).